Reading from the N-terminus, the 92-residue chain is Muscle LIM protein 1 (92 aa).

Residues 11-62 enclose the LIM zinc-binding domain; sequence CPACGKSVYAAEERVAGGYKFHKTCFKCSMCNKALDSTNCTEHEKELFCKNC. Residues 65–70 carry the Nuclear localization signal motif; sequence RKYGPK.

As to expression, in the embryo, expression is restricted to the somatic, visceral, and pharyngeal muscles. Within the somatic musculature, MLP60 is distributed throughout the muscle fibers. There is no expression in cardiac mesoderm or in fat body.

It is found in the cytoplasm. The protein resides in the nucleus. Positive regulator of myogenesis. This is Muscle LIM protein 1 (Mlp60A) from Drosophila melanogaster (Fruit fly).